A 357-amino-acid polypeptide reads, in one-letter code: Heat-inducible transcription repressor HrcA (357 aa).

This sequence belongs to the HrcA family.

In terms of biological role, negative regulator of class I heat shock genes (grpE-dnaK-dnaJ and groELS operons). Prevents heat-shock induction of these operons. The chain is Heat-inducible transcription repressor HrcA from Chlorobium phaeovibrioides (strain DSM 265 / 1930) (Prosthecochloris vibrioformis (strain DSM 265)).